The primary structure comprises 535 residues: Arylsulfatase K (535 aa).

Residues 1–22 (MLLLWLSVFAASALAAPDRGAG) form the signal peptide. Ca(2+)-binding residues include aspartate 44 and cysteine 84. The Nucleophile role is filled by cysteine 84. At cysteine 84 the chain carries 3-oxoalanine (Cys). N-linked (GlcNAc...) asparagine glycosylation is present at asparagine 112. A substrate-binding site is contributed by lysine 132. The N-linked (GlcNAc...) asparagine glycan is linked to asparagine 197. A substrate-binding site is contributed by histidine 255. Residue asparagine 266 is glycosylated (N-linked (GlcNAc...) asparagine). Residues aspartate 317 and histidine 318 each contribute to the Ca(2+) site. Residues asparagine 379, asparagine 417, and asparagine 502 are each glycosylated (N-linked (GlcNAc...) asparagine).

The protein belongs to the sulfatase family. Ca(2+) is required as a cofactor. The conversion to 3-oxoalanine (also known as C-formylglycine, FGly), of a serine or cysteine residue in prokaryotes and of a cysteine residue in eukaryotes, is critical for catalytic activity. In terms of processing, the 75-kDa precursor undergoes proteolytic processing to yield a 23 kDa form. Post-translationally, N-glycosylated with both high mannose and complex type sugars.

Its subcellular location is the secreted. It is found in the lysosome. It catalyses the reaction an aryl sulfate + H2O = a phenol + sulfate + H(+). The enzyme catalyses Hydrolysis of the 2-sulfate groups of the 2-O-sulfo-D-glucuronate residues of chondroitin sulfate, heparin and heparitin sulfate.. In terms of biological role, catalyzes the hydrolysis of pseudosubstrates such as p-nitrocatechol sulfate and p-nitrophenyl sulfate. Catalyzes the hydrolysis of the 2-sulfate groups of the 2-O-sulfo-D-glucuronate residues of chondroitin sulfate, heparin and heparitin sulfate. Acts selectively on 2-sulfoglucuronate and lacks activity against 2-sulfoiduronate. In Canis lupus familiaris (Dog), this protein is Arylsulfatase K (ARSK).